The primary structure comprises 620 residues: Glutathione-regulated potassium-efflux system protein KefC (620 aa).

12 helical membrane passes run H4–V24, L26–L46, S54–L74, G90–L110, V114–M134, F149–L169, M178–L198, V218–G238, G270–L290, L294–I314, W327–Q347, and S359–N379. The RCK N-terminal domain maps to Q399–T518. The tract at residues G597–S620 is disordered.

This sequence belongs to the monovalent cation:proton antiporter 2 (CPA2) transporter (TC 2.A.37) family. KefC subfamily. As to quaternary structure, homodimer. Interacts with the regulatory subunit KefF.

It is found in the cell inner membrane. Its function is as follows. Pore-forming subunit of a potassium efflux system that confers protection against electrophiles. Catalyzes K(+)/H(+) antiport. This is Glutathione-regulated potassium-efflux system protein KefC from Escherichia coli O6:K15:H31 (strain 536 / UPEC).